A 1112-amino-acid chain; its full sequence is Patronin (microtubule-binding protein) homolog (1112 aa).

Positions 165-286 constitute a Calponin-homology (CH) domain; it reads IDSVDALLFW…VNAFLADLFV (122 aa). Disordered stretches follow at residues 324–358, 485–504, 542–566, and 788–834; these read AARS…SRMS, EGED…QPSV, MQQQ…PSQL, and NHSE…GSGE. 2 stretches are compositionally biased toward polar residues: residues 345-358 and 489-504; these read SHSQ…SRMS and GTQS…QPSV. The span at 542-557 shows a compositional bias: low complexity; the sequence is MQQQMQQQQQQQAQAQ. Positions 802–816 are enriched in basic and acidic residues; sequence QNDRDDLSTGRKSDD. The stretch at 850–914 forms a coiled coil; it reads ALIAKTMKRK…YKRKKLEKEL (65 aa). The disordered stretch occupies residues 916–965; sequence AELSARSTGRGHSQPPFIRTKSQMSEVTESSRQNTPRMRGQSSVEQRVSV. Residues 935-951 are compositionally biased toward polar residues; sequence TKSQMSEVTESSRQNTP. The segment covering 956–965 has biased composition (low complexity); it reads QSSVEQRVSV. Residues 972–1109 enclose the CKK domain; that stretch reads THKLYAKTVT…RIPHSGTPAH (138 aa).

The protein belongs to the CAMSAP1 family. As to quaternary structure, interacts with dapk-1. As to expression, expressed in larval and adult epidermis, intestine and pharynx. Broadly expressed in the nervous system. Expressed in body wall muscle cells.

It localises to the cell projection. The protein localises to the axon. Its subcellular location is the dendrite. It is found in the cell membrane. The protein resides in the sarcolemma. It localises to the cytoplasm. The protein localises to the cytosol. Its subcellular location is the cytoskeleton. It is found in the perikaryon. Its function is as follows. Required for microtubule stability and anchorage by binding to the minus ends of microtubules. Acts redundantly with noca-1 to control circumferential microtubule assembly along the body which is necessary for larval development, viability, morphology and integrity of the epidermis. Promotes microtubule stability and polymerization in neurons. Involved in the maintenance of neurite morphology in ALM and PLM neurons. May play a role in synaptic protein localization in the PLM neuron. May act upstream of dlk-1 in neuronal regeneration. Plays a role in postembryonic epidermal tissue integrity and wound healing. The sequence is that of Patronin (microtubule-binding protein) homolog from Caenorhabditis elegans.